Here is a 434-residue protein sequence, read N- to C-terminus: Cysteine proteinase 6 (434 aa).

Residues 1–19 (MKVLSALCVLLVSVATAKQ) form the signal peptide. Positions 20–113 (QLSELQYRNA…SEKVFGGVQA (94 aa)) are cleaved as a propeptide — activation peptide. 2 disulfide bridges follow: C133/C178 and C169/C211. The active site involves C136. Residue N227 is glycosylated (N-linked (GlcNAc...) asparagine). C269 and C416 are joined by a disulfide. H276 is a catalytic residue. The interval 285–384 (SGSSGSQSQS…GGNSNSGDYP (100 aa)) is disordered. The segment covering 288 to 347 (SGSQSQSAGSQSQSSNNNWSESSQSQDSNSWSQSSQSQSSQDSNSWSQSSQSQGSNSFTG) has biased composition (low complexity). The N-linked (GlcNAc...) asparagine glycan is linked to N305. Over residues 348-358 (AGTGSGSGSVS) the composition is skewed to gly residues. Residues 359-381 (GSGSASGSSSFSGSSNGGNSNSG) show a composition bias toward low complexity. N394 is a catalytic residue.

It belongs to the peptidase C1 family.

It is found in the lysosome. The polypeptide is Cysteine proteinase 6 (cprF) (Dictyostelium discoideum (Social amoeba)).